The following is a 156-amino-acid chain: Aspartate carbamoyltransferase regulatory chain (156 aa).

The Zn(2+) site is built by cysteine 107, cysteine 112, cysteine 137, and cysteine 140.

This sequence belongs to the PyrI family. Contains catalytic and regulatory chains. It depends on Zn(2+) as a cofactor.

Its function is as follows. Involved in allosteric regulation of aspartate carbamoyltransferase. The polypeptide is Aspartate carbamoyltransferase regulatory chain (Methanopyrus kandleri (strain AV19 / DSM 6324 / JCM 9639 / NBRC 100938)).